The sequence spans 347 residues: Putative phosphoesterase 078R (347 aa).

The a divalent metal cation site is built by D52, N87, and H211.

This sequence belongs to the metallophosphoesterase superfamily. IIV-6 244L family.

The protein is Putative phosphoesterase 078R of Invertebrate iridescent virus 3 (IIV-3).